Consider the following 445-residue polypeptide: Scarecrow-like protein 18 (445 aa).

Positions 1 to 21 (MLTSFKSSSSSSEDATATTTE) are enriched in low complexity. The segment at 1–26 (MLTSFKSSSSSSEDATATTTENPPPL) is disordered. A GRAS domain is found at 32–445 (SAATSASHHL…RPLFSVSSWK (414 aa)). The segment at 39–127 (HHLRRLLFTA…STVFTSSVCK (89 aa)) is leucine repeat I (LRI). Positions 146–217 (YLWLNQLTPF…SPPPSLRITG (72 aa)) are VHIID. Positions 179-183 (LHILD) match the VHIID motif. Residues 227 to 259 (RTGDRLTRFADSLGLQFQFHTLVIVEEDLAGLL) are leucine repeat II (LRII). Positions 275-366 (IAVNCVHFLH…QRWFGKEILD (92 aa)) are PFYRE. An SAW region spans residues 369–445 (AAEETERKQR…RPLFSVSSWK (77 aa)).

The protein belongs to the GRAS family. In terms of tissue distribution, expressed in roots and flowers.

Its subcellular location is the nucleus. Functionally, probable transcription factor required for axillary (lateral) shoot meristem formation during vegetative development. Seems to act upstream of REVOLUTA. The polypeptide is Scarecrow-like protein 18 (SCL18) (Arabidopsis thaliana (Mouse-ear cress)).